A 279-amino-acid polypeptide reads, in one-letter code: Diaminopimelate epimerase (279 aa).

Residues asparagine 11 and asparagine 63 each contribute to the substrate site. Cysteine 72 functions as the Proton donor in the catalytic mechanism. Residues 73–74, asparagine 161, asparagine 194, and 212–213 contribute to the substrate site; these read GN and ER. Catalysis depends on cysteine 221, which acts as the Proton acceptor. Residue 222–223 participates in substrate binding; it reads GT.

The protein belongs to the diaminopimelate epimerase family. As to quaternary structure, homodimer.

It localises to the cytoplasm. The enzyme catalyses (2S,6S)-2,6-diaminopimelate = meso-2,6-diaminopimelate. The protein operates within amino-acid biosynthesis; L-lysine biosynthesis via DAP pathway; DL-2,6-diaminopimelate from LL-2,6-diaminopimelate: step 1/1. Catalyzes the stereoinversion of LL-2,6-diaminopimelate (L,L-DAP) to meso-diaminopimelate (meso-DAP), a precursor of L-lysine and an essential component of the bacterial peptidoglycan. The protein is Diaminopimelate epimerase of Moorella thermoacetica (strain ATCC 39073 / JCM 9320).